The sequence spans 454 residues: uncharacterized protein (454 aa).

Positions 1-25 (MHGPTSKAISRNVRSVKRPRRAPRP) are disordered. Over residues 14–23 (RSVKRPRRAP) the composition is skewed to basic residues.

Its subcellular location is the cytoplasm. The protein resides in the nucleus. This is an uncharacterized protein from Saccharomyces cerevisiae (strain ATCC 204508 / S288c) (Baker's yeast).